The chain runs to 409 residues: Argininosuccinate synthase (409 aa).

ATP contacts are provided by residues 16-24 (AYSGGLDTS) and Ala-44. L-citrulline contacts are provided by Tyr-96 and Ser-101. Gly-126 contacts ATP. Thr-128, Asn-132, and Asp-133 together coordinate L-aspartate. L-citrulline is bound at residue Asn-132. 5 residues coordinate L-citrulline: Arg-136, Ser-185, Ser-194, Glu-270, and Tyr-282.

The protein belongs to the argininosuccinate synthase family. Type 1 subfamily. In terms of assembly, homotetramer.

It is found in the cytoplasm. The enzyme catalyses L-citrulline + L-aspartate + ATP = 2-(N(omega)-L-arginino)succinate + AMP + diphosphate + H(+). Its pathway is amino-acid biosynthesis; L-arginine biosynthesis; L-arginine from L-ornithine and carbamoyl phosphate: step 2/3. The chain is Argininosuccinate synthase from Shewanella piezotolerans (strain WP3 / JCM 13877).